Consider the following 585-residue polypeptide: Glutamate decarboxylase (585 aa).

Polar residues predominate over residues Lys35–Met56. Residues Lys35–Tyr60 form a disordered region. Lys318 carries the post-translational modification N6-(pyridoxal phosphate)lysine.

This sequence belongs to the group II decarboxylase family. Requires pyridoxal 5'-phosphate as cofactor.

The enzyme catalyses L-glutamate + H(+) = 4-aminobutanoate + CO2. The sequence is that of Glutamate decarboxylase (GAD1) from Saccharomyces cerevisiae (strain ATCC 204508 / S288c) (Baker's yeast).